Here is an 88-residue protein sequence, read N- to C-terminus: Small ribosomal subunit protein uS15c (88 aa).

It belongs to the universal ribosomal protein uS15 family. Part of the 30S ribosomal subunit.

Its subcellular location is the plastid. It localises to the chloroplast. The protein is Small ribosomal subunit protein uS15c (rps15) of Marchantia polymorpha (Common liverwort).